A 330-amino-acid chain; its full sequence is Taste receptor type 2 member 136 (330 aa).

At 1–32 (MKSQPVTQELHFIFPLFKTISSDIMSFLVSIA) the chain is on the extracellular side. Residues 33-53 (GIAMLAQIVLGTFANVFIVLV) traverse the membrane as a helical segment. The Cytoplasmic portion of the chain corresponds to 54-73 (TCTDCIRRRKLFLADGILTS). A helical membrane pass occupies residues 74–94 (LAFCRIGMLWVILISWCSIVF). Over 95–122 (HQALSLQVRFSICVGWAVTNHFNMWLAT) the chain is Extracellular. The helical transmembrane segment at 123-143 (ILSILYLLKIGNFSNLIFLGL) threads the bilayer. Residues 144–149 (KRKIKS) are Cytoplasmic-facing. Residues 150–170 (VFIVVLLASLVLLFPNLITVT) traverse the membrane as a helical segment. The Extracellular portion of the chain corresponds to 171 to 201 (VCETVQANGYRGNLTGKTKRTYFMNLTAMIS). N-linked (GlcNAc...) asparagine glycosylation is found at Asn-183 and Asn-195. A helical transmembrane segment spans residues 202 to 222 (FTLDNIISFTISMVCFLLLIY). Topologically, residues 223 to 248 (SLCKHLRTMRLYGKGPHNPSASAHIK) are cytoplasmic. Residues 249-269 (ALQAVISFLLLFSMFILSLII) form a helical membrane-spanning segment. Residues 270–283 (SGYNYMKPLNEPVH) lie on the Extracellular side of the membrane. Residues 284-304 (LICQLIGTLYPSSHSYVLLWG) form a helical membrane-spanning segment. Residues 305-330 (NRRIKLAFVLAMVQVRARLWLKEEKP) are Cytoplasmic-facing.

It belongs to the G-protein coupled receptor T2R family.

It localises to the membrane. In terms of biological role, putative taste receptor which may play a role in the perception of bitterness. The polypeptide is Taste receptor type 2 member 136 (Rattus norvegicus (Rat)).